A 290-amino-acid polypeptide reads, in one-letter code: Arylamine N-acetyltransferase 2 (290 aa).

The Acyl-thioester intermediate role is filled by Cys-68. Thr-103 and Gly-104 together coordinate CoA. 106 to 107 (IH) is a substrate binding site. Catalysis depends on residues His-107 and Asp-122. Residues Tyr-208, Thr-214, and Ser-287 each contribute to the CoA site.

The protein belongs to the arylamine N-acetyltransferase family.

It localises to the cytoplasm. The enzyme catalyses an arylamine + acetyl-CoA = an N-acetylarylamine + CoA. It catalyses the reaction an N-hydroxyarylamine + acetyl-CoA = an N-acetoxyarylamine + CoA. Its function is as follows. Catalyzes the N- or O-acetylation of various arylamine and heterocyclic amine substrates, and participates in the detoxification of a plethora of hydrazine and arylamine drugs. This chain is Arylamine N-acetyltransferase 2 (NAT2), found in Macaca mulatta (Rhesus macaque).